A 207-amino-acid chain; its full sequence is MIKTLDNQVIALAGLAQATHLVRQIAQRGSADAGDMEAVVRSVFAIDADDVPSVYGGVDKIKTGLQILDRQLAGFEPPDAELARYGATLILLERKLVSAPRLLETLRTGIEQVKEQAEYFGELNDTVYANLADLYQRTVSQLRPRVMVNGQPSHLTNSTNANRIRALLLAGIRSVVLWRQCGGERWKLLFQRSAMRKEARRLLQSSQ.

Belongs to the HflD family.

It localises to the cytoplasm. It is found in the cell inner membrane. The polypeptide is High frequency lysogenization protein HflD homolog (Methylococcus capsulatus (strain ATCC 33009 / NCIMB 11132 / Bath)).